We begin with the raw amino-acid sequence, 294 residues long: MTTLIVSSNRIAQYWALTKPRVTQLAVFCAVIGMFLATPDLPDWKIVIAATIGIWLLAGAAFAINCLVEREIDSRMARTARRPMAQGEITVPQTLVFSGVIGGAGMWVLYNFVNPLTMWLTFATFVGYAVIYTIILKPATPQNIVIGGLSGAMPPALGWAAVANDLPMQAWILVLIIFIWTPPHFWALALYRRDEYAKSGLPMLPITHGTAFTQFHIWLYTIALVATTMLPFAVGMSGLIYLVVAAVLDVIFMWYAWQVYRHYTDMIARKMFTYSIIYLSLLFAALLVDHYLRF.

Helical transmembrane passes span 22-42 (VTQLAVFCAVIGMFLATPDLP), 46-66 (IVIAATIGIWLLAGAAFAINC), 89-109 (ITVPQTLVFSGVIGGAGMWVL), 116-136 (LTMWLTFATFVGYAVIYTIIL), 143-163 (NIVIGGLSGAMPPALGWAAVA), 170-190 (AWILVLIIFIWTPPHFWALAL), 211-231 (AFTQFHIWLYTIALVATTMLP), 232-252 (FAVGMSGLIYLVVAAVLDVIF), and 272-292 (FTYSIIYLSLLFAALLVDHYL).

Belongs to the UbiA prenyltransferase family. Protoheme IX farnesyltransferase subfamily.

The protein localises to the cell inner membrane. It catalyses the reaction heme b + (2E,6E)-farnesyl diphosphate + H2O = Fe(II)-heme o + diphosphate. It functions in the pathway porphyrin-containing compound metabolism; heme O biosynthesis; heme O from protoheme: step 1/1. In terms of biological role, converts heme B (protoheme IX) to heme O by substitution of the vinyl group on carbon 2 of heme B porphyrin ring with a hydroxyethyl farnesyl side group. The chain is Protoheme IX farnesyltransferase from Herminiimonas arsenicoxydans.